Reading from the N-terminus, the 84-residue chain is Acyl carrier protein (84 aa).

The 76-residue stretch at 4-79 (NEIFEKVQDI…EVVDFIKSKL (76 aa)) folds into the Carrier domain. O-(pantetheine 4'-phosphoryl)serine is present on serine 39.

It belongs to the acyl carrier protein (ACP) family. In terms of processing, 4'-phosphopantetheine is transferred from CoA to a specific serine of apo-ACP by AcpS. This modification is essential for activity because fatty acids are bound in thioester linkage to the sulfhydryl of the prosthetic group.

Its subcellular location is the plastid. The protein resides in the chloroplast. The protein operates within lipid metabolism; fatty acid biosynthesis. Its function is as follows. Carrier of the growing fatty acid chain in fatty acid biosynthesis. The chain is Acyl carrier protein from Porphyra purpurea (Red seaweed).